The following is a 223-amino-acid chain: Proteasome subunit beta type-1 (223 aa).

It belongs to the peptidase T1B family. Component of the 20S core complex of the 26S proteasome. The 26S proteasome is composed of a core protease (CP), known as the 20S proteasome, capped at one or both ends by the 19S regulatory particle (RP/PA700). The 20S proteasome core is composed of 28 subunits that are arranged in four stacked rings, resulting in a barrel-shaped structure. The two end rings are each formed by seven alpha subunits, and the two central rings are each formed by seven beta subunits. The catalytic chamber with the active sites is on the inside of the barrel. As to expression, present in all tissues examined. Slightly lower levels in roots.

It is found in the cytoplasm. It localises to the nucleus. Its function is as follows. Non-catalytic component of the proteasome, a multicatalytic proteinase complex which is characterized by its ability to cleave peptides with Arg, Phe, Tyr, Leu, and Glu adjacent to the leaving group at neutral or slightly basic pH. The proteasome has an ATP-dependent proteolytic activity. This chain is Proteasome subunit beta type-1 (PBF1), found in Arabidopsis thaliana (Mouse-ear cress).